The primary structure comprises 243 residues: MLQNIRIVLVETSHTGNMGSVARAMKTMGLTNLWLVNPLVKPDSQAIALAAGASDVIGNAQIVDTLDEALAGCSLVVGTSARSRTLPWPMLDPRECGLKSVAEAANTPVALVFGRERVGLTNDELQKCHYHVAIAANPEYSSLNLAMAVQVIAYEVRMAWLATQENGDAADHEEMPYPLVDDLERFYGHLEQTLLSTGFIRENHPGQVMNKLRRLFTRARPESQELNILRGILASIEQQNKGK.

Residues 79–81, Gly114, Ile134, and 141–143 each bind S-adenosyl-L-methionine; these read TSA and SSL.

The protein belongs to the class IV-like SAM-binding methyltransferase superfamily. RNA methyltransferase TrmH family. In terms of assembly, homodimer.

The protein localises to the cytoplasm. The catalysed reaction is cytidine(32) in tRNA + S-adenosyl-L-methionine = 2'-O-methylcytidine(32) in tRNA + S-adenosyl-L-homocysteine + H(+). The enzyme catalyses uridine(32) in tRNA + S-adenosyl-L-methionine = 2'-O-methyluridine(32) in tRNA + S-adenosyl-L-homocysteine + H(+). In terms of biological role, catalyzes the formation of 2'O-methylated cytidine (Cm32) or 2'O-methylated uridine (Um32) at position 32 in tRNA. This is tRNA (cytidine/uridine-2'-O-)-methyltransferase TrmJ (trmJ) from Salmonella choleraesuis (strain SC-B67).